Here is a 306-residue protein sequence, read N- to C-terminus: Isoaspartyl peptidase/L-asparaginase (306 aa).

Thr-174 acts as the Nucleophile in catalysis. Substrate is bound by residues 202–205 (RIGD) and 224–227 (TGKG).

This sequence belongs to the Ntn-hydrolase family. Heterotetramer of two alpha and two beta chains arranged as a dimer of alpha/beta heterodimers. Post-translationally, cleaved into an alpha and beta chain by autocatalysis; this activates the enzyme. The N-terminal residue of the beta subunit is responsible for the nucleophile hydrolase activity. As to expression, developing seeds.

The enzyme catalyses Cleavage of a beta-linked Asp residue from the N-terminus of a polypeptide.. Degrades proteins damaged by L-isoaspartyl residue formation (also known as beta-Asp residues). Also has L-asparaginase activity, which is used to liberate stored nitrogen during seed development. In Lupinus arboreus (Tree lupine), this protein is Isoaspartyl peptidase/L-asparaginase.